Reading from the N-terminus, the 299-residue chain is S-fimbrial protein subunit SfaH (299 aa).

The protein belongs to the fimbrial protein family.

Its subcellular location is the fimbrium. Fimbriae (also called pili), polar filaments radiating from the surface of the bacterium to a length of 0.5-1.5 micrometers and numbering 100-300 per cell, enable bacteria to colonize the epithelium of specific host organs. In terms of biological role, a minor fimbrial subunit. This protein is necessary for full expression of S-specific binding. S-fimbrial adhesins enable pathogenic E.coli causing urinary-tract infections or newborn meningitis to attach to glycoproteins terminating with alpha-sialic acid-(2-3)-beta-Gal. The sequence is that of S-fimbrial protein subunit SfaH (sfaH) from Escherichia coli O6:K15:H31 (strain 536 / UPEC).